The following is a 334-amino-acid chain: Petrobactin import system permease protein FatD (334 aa).

Helical transmembrane passes span F24 to Y44, T64 to I84, I98 to V118, Q119 to L139, I152 to F172, L197 to A217, I234 to G254, S277 to S297, and F304 to L324.

This sequence belongs to the binding-protein-dependent transport system permease family. FecCD subfamily. The complex is composed of two ATP-binding proteins (FatE), two transmembrane proteins (FatC and FatD) and a solute-binding protein (FpuA).

The protein localises to the cell membrane. Part of an ABC transporter complex involved in ferric-petrobactin uptake. Probably responsible for the translocation of the substrate across the membrane. In Bacillus anthracis, this protein is Petrobactin import system permease protein FatD.